The following is a 502-amino-acid chain: Glycerol kinase (502 aa).

Position 14 (threonine 14) interacts with ADP. Residues threonine 14, threonine 15, and serine 16 each contribute to the ATP site. Threonine 14 contacts sn-glycerol 3-phosphate. Arginine 18 contacts ADP. The sn-glycerol 3-phosphate site is built by arginine 84, glutamate 85, and tyrosine 136. Glycerol-binding residues include arginine 84, glutamate 85, and tyrosine 136. Residue histidine 232 is modified to Phosphohistidine; by HPr. Residue aspartate 246 participates in sn-glycerol 3-phosphate binding. Residues aspartate 246 and glutamine 247 each coordinate glycerol. Residues threonine 268 and glycine 311 each contribute to the ADP site. Residues threonine 268, glycine 311, glutamine 315, and glycine 412 each coordinate ATP. Residues glycine 412 and asparagine 416 each contribute to the ADP site.

Belongs to the FGGY kinase family. As to quaternary structure, homotetramer and homodimer (in equilibrium). Post-translationally, the phosphoenolpyruvate-dependent sugar phosphotransferase system (PTS), including enzyme I, and histidine-containing protein (HPr) are required for the phosphorylation, which leads to the activation of the enzyme.

It carries out the reaction glycerol + ATP = sn-glycerol 3-phosphate + ADP + H(+). Its pathway is polyol metabolism; glycerol degradation via glycerol kinase pathway; sn-glycerol 3-phosphate from glycerol: step 1/1. Activated by phosphorylation and inhibited by fructose 1,6-bisphosphate (FBP). Key enzyme in the regulation of glycerol uptake and metabolism. Catalyzes the phosphorylation of glycerol to yield sn-glycerol 3-phosphate. The polypeptide is Glycerol kinase (Streptococcus sanguinis (strain SK36)).